The primary structure comprises 711 residues: Putative membrane protein IgaA homolog (711 aa).

M1 is a topological domain (periplasmic). The helical transmembrane segment at 2-22 (STIVIFLAALLACSLLAGWLI) threads the bilayer. Residues 23 to 204 (KVRSRRRQLP…YALSRPRGLR (182 aa)) are Cytoplasmic-facing. 2 helical membrane-spanning segments follow: residues 205–225 (EALL…TPDV) and 226–246 (FVPW…WGLF). The Cytoplasmic segment spans residues 247 to 339 (APPAKSSLRE…KNFPLQHWLR (93 aa)). Residues 340–360 (STIIAAGSLLVLFMLLFWIPL) form a helical membrane-spanning segment. Residues 361 to 655 (DMPLKFTLSW…IPDRSGLWRY (295 aa)) are Periplasmic-facing. Residues 656-676 (LSTTLLLLTMLGSAIYNGVQA) form a helical membrane-spanning segment. The Cytoplasmic portion of the chain corresponds to 677 to 711 (WRRYQRHRTRMMEIQAYYESCLNPQLITPSESLIE).

Belongs to the IgaA family.

It is found in the cell inner membrane. The chain is Putative membrane protein IgaA homolog (yrfF) from Escherichia coli (strain K12).